The following is an 89-amino-acid chain: Acyl carrier protein MbtL (89 aa).

The Carrier domain maps to 8 to 83; that stretch reads NHVSAELLGI…DLQAAIAAEP (76 aa). S43 carries the post-translational modification O-(pantetheine 4'-phosphoryl)serine.

Post-translationally, 4'-phosphopantetheine is transferred from CoA to a specific serine of apo-ACP, leading to the activated holo-ACP form.

It localises to the cytoplasm. The protein operates within siderophore biosynthesis; mycobactin biosynthesis. Functionally, acyl carrier protein involved in the formation of acyl-S-ACP intermediates within the mycobactin biosynthesis process. The polypeptide is Acyl carrier protein MbtL (mbtL) (Mycolicibacterium paratuberculosis (strain ATCC BAA-968 / K-10) (Mycobacterium paratuberculosis)).